Here is a 503-residue protein sequence, read N- to C-terminus: Probable cytosol aminopeptidase (503 aa).

Lys271 and Asp276 together coordinate Mn(2+). The active site involves Lys283. Asp294, Asp353, and Glu355 together coordinate Mn(2+). Arg357 is an active-site residue.

It belongs to the peptidase M17 family. It depends on Mn(2+) as a cofactor.

It localises to the cytoplasm. The catalysed reaction is Release of an N-terminal amino acid, Xaa-|-Yaa-, in which Xaa is preferably Leu, but may be other amino acids including Pro although not Arg or Lys, and Yaa may be Pro. Amino acid amides and methyl esters are also readily hydrolyzed, but rates on arylamides are exceedingly low.. It carries out the reaction Release of an N-terminal amino acid, preferentially leucine, but not glutamic or aspartic acids.. Its function is as follows. Presumably involved in the processing and regular turnover of intracellular proteins. Catalyzes the removal of unsubstituted N-terminal amino acids from various peptides. The sequence is that of Probable cytosol aminopeptidase from Chlorobium phaeobacteroides (strain DSM 266 / SMG 266 / 2430).